The following is a 477-amino-acid chain: Bifunctional protein HldE (477 aa).

Residues 1-319 (MKITLPPFDQ…RALQEQEQSG (319 aa)) are ribokinase. ATP is bound at residue 195–198 (NLAE). The active site involves aspartate 264. The segment at 344 to 477 (MTNGCFDLLH…IERMQSAPDT (134 aa)) is cytidylyltransferase.

In the N-terminal section; belongs to the carbohydrate kinase PfkB family. It in the C-terminal section; belongs to the cytidylyltransferase family. In terms of assembly, homodimer.

The catalysed reaction is D-glycero-beta-D-manno-heptose 7-phosphate + ATP = D-glycero-beta-D-manno-heptose 1,7-bisphosphate + ADP + H(+). The enzyme catalyses D-glycero-beta-D-manno-heptose 1-phosphate + ATP + H(+) = ADP-D-glycero-beta-D-manno-heptose + diphosphate. Its pathway is nucleotide-sugar biosynthesis; ADP-L-glycero-beta-D-manno-heptose biosynthesis; ADP-L-glycero-beta-D-manno-heptose from D-glycero-beta-D-manno-heptose 7-phosphate: step 1/4. The protein operates within nucleotide-sugar biosynthesis; ADP-L-glycero-beta-D-manno-heptose biosynthesis; ADP-L-glycero-beta-D-manno-heptose from D-glycero-beta-D-manno-heptose 7-phosphate: step 3/4. In terms of biological role, catalyzes the phosphorylation of D-glycero-D-manno-heptose 7-phosphate at the C-1 position to selectively form D-glycero-beta-D-manno-heptose-1,7-bisphosphate. Functionally, catalyzes the ADP transfer from ATP to D-glycero-beta-D-manno-heptose 1-phosphate, yielding ADP-D-glycero-beta-D-manno-heptose. The chain is Bifunctional protein HldE from Alkalilimnicola ehrlichii (strain ATCC BAA-1101 / DSM 17681 / MLHE-1).